A 349-amino-acid polypeptide reads, in one-letter code: Nitrilase, bromoxynil-specific (349 aa).

The 270-residue stretch at 5-274 (FKAAAVQAEP…EGIVYAEIDL (270 aa)) folds into the CN hydrolase domain. Glutamate 45 serves as the catalytic Proton acceptor. Catalysis depends on lysine 127, which acts as the Proton donor. Cysteine 161 (nucleophile) is an active-site residue.

It belongs to the carbon-nitrogen hydrolase superfamily. Nitrilase family. As to quaternary structure, homodimer.

The catalysed reaction is a nitrile + 2 H2O = a carboxylate + NH4(+). Specific for the herbicide bromoxynil (3,5-dibromo-4-hydroxybenzonitrile); converts it to its metabolite 3,5-dibromo-4-hydroxybenzoic acid. This is Nitrilase, bromoxynil-specific (bxn) from Klebsiella pneumoniae subsp. ozaenae.